Here is a 213-residue protein sequence, read N- to C-terminus: Ras-related protein RabK1 (213 aa).

14–21 is a GTP binding site; it reads GDRMVGKL. Residues 36 to 43 carry the Effector region motif; sequence GNSIPFDF. Residues 61–65 and 119–122 contribute to the GTP site; these read NTHGS and TKSD.

It belongs to the small GTPase superfamily. Rab family.

This chain is Ras-related protein RabK1 (rabK1), found in Dictyostelium discoideum (Social amoeba).